We begin with the raw amino-acid sequence, 152 residues long: Xanthine-guanine phosphoribosyltransferase (152 aa).

5-phospho-alpha-D-ribose 1-diphosphate is bound by residues 37–38 (RG), R69, and 88–96 (DDLVDTGGT). R69 is a binding site for GMP. Position 89 (D89) interacts with Mg(2+). Guanine is bound by residues D92 and I135. Positions 92 and 135 each coordinate xanthine. GMP is bound by residues 92–96 (DTGGT) and 134–135 (WI).

Belongs to the purine/pyrimidine phosphoribosyltransferase family. XGPT subfamily. As to quaternary structure, homotetramer. Mg(2+) is required as a cofactor.

It localises to the cell inner membrane. It carries out the reaction GMP + diphosphate = guanine + 5-phospho-alpha-D-ribose 1-diphosphate. The catalysed reaction is XMP + diphosphate = xanthine + 5-phospho-alpha-D-ribose 1-diphosphate. The enzyme catalyses IMP + diphosphate = hypoxanthine + 5-phospho-alpha-D-ribose 1-diphosphate. It participates in purine metabolism; GMP biosynthesis via salvage pathway; GMP from guanine: step 1/1. It functions in the pathway purine metabolism; XMP biosynthesis via salvage pathway; XMP from xanthine: step 1/1. Functionally, purine salvage pathway enzyme that catalyzes the transfer of the ribosyl-5-phosphate group from 5-phospho-alpha-D-ribose 1-diphosphate (PRPP) to the N9 position of the 6-oxopurines guanine and xanthine to form the corresponding ribonucleotides GMP (guanosine 5'-monophosphate) and XMP (xanthosine 5'-monophosphate), with the release of PPi. To a lesser extent, also acts on hypoxanthine. The protein is Xanthine-guanine phosphoribosyltransferase of Escherichia coli O127:H6 (strain E2348/69 / EPEC).